Consider the following 56-residue polypeptide: Large ribosomal subunit protein bL32 (56 aa).

The segment at 1–37 is disordered; that stretch reads MAVQQNKKSRSRRDMRRSHDALTTAAVSVDKASGETH. Residues 7–16 are compositionally biased toward basic residues; the sequence is KKSRSRRDMR.

The protein belongs to the bacterial ribosomal protein bL32 family.

In Haemophilus influenzae (strain PittEE), this protein is Large ribosomal subunit protein bL32.